The sequence spans 36 residues: Potassium channel toxin alpha-KTx 1.9 (36 aa).

Belongs to the short scorpion toxin superfamily. Potassium channel inhibitor family. Alpha-KTx 01 subfamily. As to expression, expressed by the venom gland.

The protein localises to the secreted. In terms of biological role, potent selective inhibitor of Kv1/KCNA voltage-gated potassium channels. This Centruroides limbatus (Bark scorpion) protein is Potassium channel toxin alpha-KTx 1.9.